A 478-amino-acid polypeptide reads, in one-letter code: Pyrrolysine--tRNA ligase (478 aa).

Residues 106 to 188 (VMPKSVARTP…TSAMPASTSA (83 aa)) are disordered. Residues 122-132 (APVQTLPSESQ) are compositionally biased toward polar residues. Residues 133-188 (PAPTTPISASTTAPASTSTTAPAPASTTAPAPASTTAPASASTTISTSAMPASTSA) are compositionally biased toward low complexity.

Belongs to the class-II aminoacyl-tRNA synthetase family.

It is found in the cytoplasm. It carries out the reaction tRNA(Pyl) + L-pyrrolysine + ATP = L-pyrrolysyl-tRNA(Pyl) + AMP + diphosphate. Catalyzes the attachment of pyrrolysine to tRNA(Pyl). Pyrrolysine is a lysine derivative encoded by the termination codon UAG. The protein is Pyrrolysine--tRNA ligase of Methanosarcina thermophila.